The following is a 122-amino-acid chain: Large ribosomal subunit protein uL14 (122 aa).

The protein belongs to the universal ribosomal protein uL14 family. In terms of assembly, part of the 50S ribosomal subunit. Forms a cluster with proteins L3 and L19. In the 70S ribosome, L14 and L19 interact and together make contacts with the 16S rRNA in bridges B5 and B8.

Its function is as follows. Binds to 23S rRNA. Forms part of two intersubunit bridges in the 70S ribosome. This Marinobacter nauticus (strain ATCC 700491 / DSM 11845 / VT8) (Marinobacter aquaeolei) protein is Large ribosomal subunit protein uL14.